The chain runs to 463 residues: ATP synthase subunit beta (463 aa).

153–160 (GGAGVGKT) contributes to the ATP binding site.

It belongs to the ATPase alpha/beta chains family. F-type ATPases have 2 components, CF(1) - the catalytic core - and CF(0) - the membrane proton channel. CF(1) has five subunits: alpha(3), beta(3), gamma(1), delta(1), epsilon(1). CF(0) has three main subunits: a(1), b(2) and c(9-12). The alpha and beta chains form an alternating ring which encloses part of the gamma chain. CF(1) is attached to CF(0) by a central stalk formed by the gamma and epsilon chains, while a peripheral stalk is formed by the delta and b chains.

The protein localises to the cell inner membrane. It catalyses the reaction ATP + H2O + 4 H(+)(in) = ADP + phosphate + 5 H(+)(out). Its function is as follows. Produces ATP from ADP in the presence of a proton gradient across the membrane. The catalytic sites are hosted primarily by the beta subunits. This Burkholderia cepacia (Pseudomonas cepacia) protein is ATP synthase subunit beta.